A 273-amino-acid polypeptide reads, in one-letter code: Translation initiation factor IF-3, mitochondrial (273 aa).

Residues 1 to 32 constitute a mitochondrion transit peptide; sequence MAALFLKKLTLQTVKTENYCIRRCLGKYILQG. The propeptide at 33 to 92 is removed in mature form; that stretch reads PAPTQQPPRPSCLIHAKAFSTEDTQDEMTKKKKNETAFSSVGRKINERIIHVLDEQGNDL. Residues 242–273 form a disordered region; sequence EEAAWKAAPDTPRRDALNGGDGKDGASGVLPQ. Residues 252–265 are compositionally biased toward basic and acidic residues; the sequence is TPRRDALNGGDGKD.

This sequence belongs to the IF-3 family.

The protein localises to the mitochondrion. IF-3 binds to the 28S ribosomal subunit and shifts the equilibrium between 55S ribosomes and their 39S and 28S subunits in favor of the free subunits, thus enhancing the availability of 28S subunits on which protein synthesis initiation begins. This is Translation initiation factor IF-3, mitochondrial (MTIF3) from Bos taurus (Bovine).